The sequence spans 272 residues: Ribosomal RNA small subunit methyltransferase A (272 aa).

S-adenosyl-L-methionine-binding residues include Asn18, Leu20, Gly45, Glu66, Asp91, and Asn113.

The protein belongs to the class I-like SAM-binding methyltransferase superfamily. rRNA adenine N(6)-methyltransferase family. RsmA subfamily.

It localises to the cytoplasm. It catalyses the reaction adenosine(1518)/adenosine(1519) in 16S rRNA + 4 S-adenosyl-L-methionine = N(6)-dimethyladenosine(1518)/N(6)-dimethyladenosine(1519) in 16S rRNA + 4 S-adenosyl-L-homocysteine + 4 H(+). In terms of biological role, specifically dimethylates two adjacent adenosines (A1518 and A1519) in the loop of a conserved hairpin near the 3'-end of 16S rRNA in the 30S particle. May play a critical role in biogenesis of 30S subunits. The sequence is that of Ribosomal RNA small subunit methyltransferase A from Photorhabdus laumondii subsp. laumondii (strain DSM 15139 / CIP 105565 / TT01) (Photorhabdus luminescens subsp. laumondii).